The following is a 287-amino-acid chain: Hydroxyethylthiazole kinase (287 aa).

Methionine 50 contributes to the substrate binding site. Residues arginine 126 and serine 185 each contribute to the ATP site. Glycine 212 is a binding site for substrate.

The protein belongs to the Thz kinase family. Mg(2+) serves as cofactor.

It catalyses the reaction 5-(2-hydroxyethyl)-4-methylthiazole + ATP = 4-methyl-5-(2-phosphooxyethyl)-thiazole + ADP + H(+). The protein operates within cofactor biosynthesis; thiamine diphosphate biosynthesis; 4-methyl-5-(2-phosphoethyl)-thiazole from 5-(2-hydroxyethyl)-4-methylthiazole: step 1/1. In terms of biological role, catalyzes the phosphorylation of the hydroxyl group of 4-methyl-5-beta-hydroxyethylthiazole (THZ). In Methanobrevibacter smithii (strain ATCC 35061 / DSM 861 / OCM 144 / PS), this protein is Hydroxyethylthiazole kinase.